The following is a 93-amino-acid chain: Large ribosomal subunit protein uL23 (93 aa).

It belongs to the universal ribosomal protein uL23 family. In terms of assembly, part of the 50S ribosomal subunit. Contacts protein L29, and trigger factor when it is bound to the ribosome.

In terms of biological role, one of the early assembly proteins it binds 23S rRNA. One of the proteins that surrounds the polypeptide exit tunnel on the outside of the ribosome. Forms the main docking site for trigger factor binding to the ribosome. This Helicobacter pylori (strain P12) protein is Large ribosomal subunit protein uL23.